The chain runs to 466 residues: Ribulose bisphosphate carboxylase large chain (466 aa).

N6,N6,N6-trimethyllysine is present on Lys5. Positions 114 and 164 each coordinate substrate. Lys166 serves as the catalytic Proton acceptor. Lys168 contacts substrate. 3 residues coordinate Mg(2+): Lys192, Asp194, and Glu195. Residue Lys192 is modified to N6-carboxylysine. His285 functions as the Proton acceptor in the catalytic mechanism. The substrate site is built by Arg286, His318, and Ser370.

The protein belongs to the RuBisCO large chain family. Type I subfamily. In terms of assembly, heterohexadecamer of 8 large chains and 8 small chains; disulfide-linked. The disulfide link is formed within the large subunit homodimers. The cofactor is Mg(2+). Post-translationally, the disulfide bond which can form in the large chain dimeric partners within the hexadecamer appears to be associated with oxidative stress and protein turnover.

Its subcellular location is the plastid. The protein localises to the chloroplast. It catalyses the reaction 2 (2R)-3-phosphoglycerate + 2 H(+) = D-ribulose 1,5-bisphosphate + CO2 + H2O. The catalysed reaction is D-ribulose 1,5-bisphosphate + O2 = 2-phosphoglycolate + (2R)-3-phosphoglycerate + 2 H(+). Functionally, ruBisCO catalyzes two reactions: the carboxylation of D-ribulose 1,5-bisphosphate, the primary event in carbon dioxide fixation, as well as the oxidative fragmentation of the pentose substrate in the photorespiration process. Both reactions occur simultaneously and in competition at the same active site. This Averrhoa carambola (Star fruit) protein is Ribulose bisphosphate carboxylase large chain.